The following is a 373-amino-acid chain: Cobalt-precorrin-5B C(1)-methyltransferase (373 aa).

This sequence belongs to the CbiD family.

The enzyme catalyses Co-precorrin-5B + S-adenosyl-L-methionine = Co-precorrin-6A + S-adenosyl-L-homocysteine. It participates in cofactor biosynthesis; adenosylcobalamin biosynthesis; cob(II)yrinate a,c-diamide from sirohydrochlorin (anaerobic route): step 6/10. In terms of biological role, catalyzes the methylation of C-1 in cobalt-precorrin-5B to form cobalt-precorrin-6A. This is Cobalt-precorrin-5B C(1)-methyltransferase from Listeria monocytogenes serotype 4a (strain HCC23).